Here is a 222-residue protein sequence, read N- to C-terminus: Transmembrane protein 114 (222 aa).

A helical transmembrane segment spans residues Ala-7–Ile-27. Asn-54 and Asn-88 each carry an N-linked (GlcNAc...) asparagine glycan. Transmembrane regions (helical) follow at residues Phe-105–Leu-125, Leu-133–Ile-153, and Leu-188–Ala-208.

The protein localises to the cell junction. It localises to the tight junction. It is found in the lateral cell membrane. The protein resides in the apical cell membrane. The sequence is that of Transmembrane protein 114 from Mus musculus (Mouse).